Reading from the N-terminus, the 177-residue chain is O-acetyl-ADP-ribose deacetylase (177 aa).

Residues 1-175 (MKSRIHVQHG…LYERLLTQQG (175 aa)) enclose the Macro domain. Substrate-binding positions include 11–12 (DI), Asn-25, 33–35 (GVD), and 122–126 (STGAY). Residue Asp-35 is the Proton acceptor of the active site.

This sequence belongs to the MacroD-type family. YmdB subfamily. As to quaternary structure, homodimer. Interacts with RNase III.

The enzyme catalyses 3''-O-acetyl-ADP-D-ribose + H2O = ADP-D-ribose + acetate + H(+). It catalyses the reaction 2''-O-acetyl-ADP-D-ribose + H2O = ADP-D-ribose + acetate + H(+). Deacetylates O-acetyl-ADP ribose to yield ADP-ribose and free acetate. Down-regulates ribonuclease 3 (RNase III) activity. Acts by interacting directly with the region of the ribonuclease that is required for dimerization/activation. This is O-acetyl-ADP-ribose deacetylase from Citrobacter koseri (strain ATCC BAA-895 / CDC 4225-83 / SGSC4696).